Here is a 581-residue protein sequence, read N- to C-terminus: UvrABC system protein C (581 aa).

Residues 15–94 form the GIY-YIG domain; the sequence is REPGVYLFEQ…IKRHRPPYNV (80 aa). One can recognise a UVR domain in the interval 202 to 237; sequence GVLADPLRREMEAAAQNQEFERAANLRDKLGAVEAL.

This sequence belongs to the UvrC family. In terms of assembly, interacts with UvrB in an incision complex.

Its subcellular location is the cytoplasm. In terms of biological role, the UvrABC repair system catalyzes the recognition and processing of DNA lesions. UvrC both incises the 5' and 3' sides of the lesion. The N-terminal half is responsible for the 3' incision and the C-terminal half is responsible for the 5' incision. This chain is UvrABC system protein C, found in Haloarcula marismortui (strain ATCC 43049 / DSM 3752 / JCM 8966 / VKM B-1809) (Halobacterium marismortui).